A 106-amino-acid chain; its full sequence is Ribonuclease P protein component 4 (106 aa).

Zn(2+) is bound by residues cysteine 57, cysteine 60, cysteine 83, and cysteine 86.

This sequence belongs to the eukaryotic/archaeal RNase P protein component 4 family. Consists of a catalytic RNA component and at least 4-5 protein subunits. Zn(2+) serves as cofactor.

It localises to the cytoplasm. It catalyses the reaction Endonucleolytic cleavage of RNA, removing 5'-extranucleotides from tRNA precursor.. Functionally, part of ribonuclease P, a protein complex that generates mature tRNA molecules by cleaving their 5'-ends. The chain is Ribonuclease P protein component 4 from Saccharolobus solfataricus (strain ATCC 35092 / DSM 1617 / JCM 11322 / P2) (Sulfolobus solfataricus).